We begin with the raw amino-acid sequence, 828 residues long: Leucine--tRNA ligase (828 aa).

The 'HIGH' region signature appears at 36-46 (PYPSGKIHIGH). A 'KMSKS' region motif is present at residues 595 to 599 (KMSKS). K598 contributes to the ATP binding site.

The protein belongs to the class-I aminoacyl-tRNA synthetase family.

The protein localises to the cytoplasm. The catalysed reaction is tRNA(Leu) + L-leucine + ATP = L-leucyl-tRNA(Leu) + AMP + diphosphate. This is Leucine--tRNA ligase from Rickettsia typhi (strain ATCC VR-144 / Wilmington).